The primary structure comprises 293 residues: MAWIQIRLNSTNERAEAISDFLEELGSVSVTFMDSQDTPIFEPLPGETRLWGNTDVIALFDAETEMQPVLTALRQSGLLEEGFAYKIEQIEDKDWEREWMDNFHPMQFGKRLWICPSWREIPDPNAVNVMLDPGLAFGTGTHPTTALCLEWLDGLDLTGKTVIDFGCGSGILAIAALKLGAKNAIGIDIDPQAILASGSNAQANGVADRLQLFLSDRQPADLKADVVVANILAGPLKELYPVISQLVKPKGDLGLSGILKTQAASVCEAYAQTFELEPVAVREEWCRITGKLA.

Residues T145, G166, D188, and N230 each coordinate S-adenosyl-L-methionine.

Belongs to the methyltransferase superfamily. PrmA family.

Its subcellular location is the cytoplasm. The catalysed reaction is L-lysyl-[protein] + 3 S-adenosyl-L-methionine = N(6),N(6),N(6)-trimethyl-L-lysyl-[protein] + 3 S-adenosyl-L-homocysteine + 3 H(+). Methylates ribosomal protein L11. This chain is Ribosomal protein L11 methyltransferase, found in Actinobacillus succinogenes (strain ATCC 55618 / DSM 22257 / CCUG 43843 / 130Z).